Reading from the N-terminus, the 332-residue chain is Centrosomal AT-AC splicing factor (332 aa).

The required for centrosome location stretch occupies residues 1-169; it reads MAPAQRCPLC…QSRQEVVRSV (169 aa). Lys31 carries the post-translational modification N6-acetyllysine; by NAT10. A coiled-coil region spans residues 137–168; that stretch reads LDSYEEKEDKVIKEMAAQIREVEQSRQEVVRS. Residues 169–213 form a disordered region; it reads VLEPQAVPDPEEGSSAPRSWKGMNSQVASSLQQPSNLDLPPAPEL. A compositionally biased stretch (polar residues) spans 190–204; the sequence is GMNSQVASSLQQPSN.

In terms of assembly, interacts with SASS6; the interaction increases with CENATAC acetylation. In terms of processing, acetylated. Acetylation oscillates throughout the cell cycle, and the acetylation state at Lys-31 is regulated by the deacetylase SIRT1 and the acetyltransferase NAT10. Deacetylated CENATAC is responsible for its centrosome targeting, and acetylated CENATAC promotes SASS6 degradation by enhancing the binding affinity of SASS6 for APC/C E3 ubiquitin-protein ligase complex/FZR1.

It is found in the cytoplasm. The protein localises to the cytoskeleton. Its subcellular location is the microtubule organizing center. The protein resides in the centrosome. Its function is as follows. Component of the minor spliceosome that promotes splicing of a specific, rare minor intron subtype. Negative regulator of centrosome duplication. Constrains centriole number by modulating the degradation of the centrosome-duplication-associated protein SASS6 in an acetylation-dependent manner. SIRT1 deacetylates CENATAC in G1 phase, allowing for SASS6 accumulation on the centrosome and subsequent procentriole assembly. The CENATAC acetylation level is restored in mitosis by NAT10, promoting SASS6 proteasome degradation by facilitating SASS6 binding to APC/C E3 ubiquitin-protein ligase complex/FZR1. In Homo sapiens (Human), this protein is Centrosomal AT-AC splicing factor.